We begin with the raw amino-acid sequence, 165 residues long: Sec-independent protein translocase protein TatB (165 aa).

The helical transmembrane segment at 1-21 threads the bilayer; it reads MFDVSFTELIVIGVVALIVLG. The segment covering 67–84 has biased composition (polar residues); it reads DSTAQDVNQSLRSATDSL. The disordered stretch occupies residues 67-165; sequence DSTAQDVNQS…PKSPSTGNAT (99 aa). Over residues 127–159 the composition is skewed to low complexity; sequence KLPGTPATLPATAAAEPTPAAPAASQAEAPKSP.

This sequence belongs to the TatB family. The Tat system comprises two distinct complexes: a TatABC complex, containing multiple copies of TatA, TatB and TatC subunits, and a separate TatA complex, containing only TatA subunits. Substrates initially bind to the TatABC complex, which probably triggers association of the separate TatA complex to form the active translocon.

It localises to the cell inner membrane. Part of the twin-arginine translocation (Tat) system that transports large folded proteins containing a characteristic twin-arginine motif in their signal peptide across membranes. Together with TatC, TatB is part of a receptor directly interacting with Tat signal peptides. TatB may form an oligomeric binding site that transiently accommodates folded Tat precursor proteins before their translocation. This Bordetella avium (strain 197N) protein is Sec-independent protein translocase protein TatB.